We begin with the raw amino-acid sequence, 258 residues long: Imidazole glycerol phosphate synthase subunit HisF (258 aa).

Active-site residues include D11 and D130.

The protein belongs to the HisA/HisF family. Heterodimer of HisH and HisF.

It is found in the cytoplasm. The enzyme catalyses 5-[(5-phospho-1-deoxy-D-ribulos-1-ylimino)methylamino]-1-(5-phospho-beta-D-ribosyl)imidazole-4-carboxamide + L-glutamine = D-erythro-1-(imidazol-4-yl)glycerol 3-phosphate + 5-amino-1-(5-phospho-beta-D-ribosyl)imidazole-4-carboxamide + L-glutamate + H(+). Its pathway is amino-acid biosynthesis; L-histidine biosynthesis; L-histidine from 5-phospho-alpha-D-ribose 1-diphosphate: step 5/9. Its function is as follows. IGPS catalyzes the conversion of PRFAR and glutamine to IGP, AICAR and glutamate. The HisF subunit catalyzes the cyclization activity that produces IGP and AICAR from PRFAR using the ammonia provided by the HisH subunit. The sequence is that of Imidazole glycerol phosphate synthase subunit HisF from Nitrobacter hamburgensis (strain DSM 10229 / NCIMB 13809 / X14).